The chain runs to 177 residues: Large ribosomal subunit protein uL10 (177 aa).

It belongs to the universal ribosomal protein uL10 family. As to quaternary structure, part of the ribosomal stalk of the 50S ribosomal subunit. The N-terminus interacts with L11 and the large rRNA to form the base of the stalk. The C-terminus forms an elongated spine to which L12 dimers bind in a sequential fashion forming a multimeric L10(L12)X complex.

Forms part of the ribosomal stalk, playing a central role in the interaction of the ribosome with GTP-bound translation factors. In Xanthomonas axonopodis pv. citri (strain 306), this protein is Large ribosomal subunit protein uL10.